Reading from the N-terminus, the 31-residue chain is M-poneritoxin-Nc3b (31 aa).

The protein belongs to the ponericin-G family. In terms of tissue distribution, expressed by the venom gland.

It localises to the secreted. Its subcellular location is the target cell membrane. Functionally, membrane-perturbating peptide with a few moderate activities. It is insecticidal, since it induces reversible paralysis in insects (L.cuprina) after 1 hour, but fails to kill them. It is also antiparasitic, since it moderately inhibits the larval development of the major pathogenic nematode of ruminants (H.contortus, IC(50)=23.2 uM) and reduces the motility of adult males of the other nematode B.malayi. It does not show antibacterial activity (MIC&gt;40 uM). It is not cytotoxic to HEK293 cells and does not induce hemolysis in human erythrocytes. It does not cause an increase in intracellular calcium concentration on neuronal and epithelial cell lines. The chain is M-poneritoxin-Nc3b from Neoponera commutata (Large hunting ant).